A 118-amino-acid polypeptide reads, in one-letter code: MPRVKGGTVTRARRKKTIKLAKGYFGAKHTLYKVAKQQVMKSGQYAFRDRRQRKRDFRKLWITRINAAARQHDMSYSRLMNGLKKADININRKMLSEVAISDEKAFAELVSKAKEALK.

This sequence belongs to the bacterial ribosomal protein bL20 family.

In terms of biological role, binds directly to 23S ribosomal RNA and is necessary for the in vitro assembly process of the 50S ribosomal subunit. It is not involved in the protein synthesizing functions of that subunit. The protein is Large ribosomal subunit protein bL20 of Staphylococcus haemolyticus (strain JCSC1435).